An 855-amino-acid polypeptide reads, in one-letter code: DNA mismatch repair protein MutS (855 aa).

613–620 (GPNMGGKS) lines the ATP pocket. The tract at residues 796–817 (TTSLPHEQPRAKPGKPAIPQQS) is disordered.

Belongs to the DNA mismatch repair MutS family.

Functionally, this protein is involved in the repair of mismatches in DNA. It is possible that it carries out the mismatch recognition step. This protein has a weak ATPase activity. The sequence is that of DNA mismatch repair protein MutS from Pseudomonas syringae pv. tomato (strain ATCC BAA-871 / DC3000).